Reading from the N-terminus, the 45-residue chain is MESIMSLKRKEKKSQSRRLGKYLKEQKGRIYIIRRCVMMLLCSHD.

The segment at 14-45 (SQSRRLGKYLKEQKGRIYIIRRCVMMLLCSHD) is required for DVL/RTFL small polypeptide activity. Residues 17-33 (RRLGKYLKEQKGRIYII) form a helical membrane-spanning segment.

It belongs to the DVL/RTFL small polypeptides family. As to expression, mostly expressed in stems and, to a lower extent, in roots and leaves.

It localises to the cell membrane. Its function is as follows. Small polypeptide acting as a regulatory molecule which coordinates cellular responses required for differentiation, growth and development, including leaves shape, pedicule elongation, inflorescence organization and fruit maturation, probably by restricting polar cell proliferation in lateral organs and coordinating socket cell recruitment and differentiation at trichome sites. The protein is Small polypeptide DEVIL 2 of Arabidopsis thaliana (Mouse-ear cress).